Consider the following 281-residue polypeptide: Putative phosphoenolpyruvate synthase regulatory protein (281 aa).

161-168 provides a ligand contact to ADP; the sequence is GVSRSGKT.

Belongs to the pyruvate, phosphate/water dikinase regulatory protein family. PSRP subfamily.

It catalyses the reaction [pyruvate, water dikinase] + ADP = [pyruvate, water dikinase]-phosphate + AMP + H(+). The enzyme catalyses [pyruvate, water dikinase]-phosphate + phosphate + H(+) = [pyruvate, water dikinase] + diphosphate. Functionally, bifunctional serine/threonine kinase and phosphorylase involved in the regulation of the phosphoenolpyruvate synthase (PEPS) by catalyzing its phosphorylation/dephosphorylation. This Herminiimonas arsenicoxydans protein is Putative phosphoenolpyruvate synthase regulatory protein.